The sequence spans 311 residues: Porphobilinogen deaminase (311 aa).

Cysteine 243 bears the S-(dipyrrolylmethanemethyl)cysteine mark.

It belongs to the HMBS family. Monomer. Dipyrromethane serves as cofactor.

It catalyses the reaction 4 porphobilinogen + H2O = hydroxymethylbilane + 4 NH4(+). It functions in the pathway porphyrin-containing compound metabolism; protoporphyrin-IX biosynthesis; coproporphyrinogen-III from 5-aminolevulinate: step 2/4. In terms of biological role, tetrapolymerization of the monopyrrole PBG into the hydroxymethylbilane pre-uroporphyrinogen in several discrete steps. The polypeptide is Porphobilinogen deaminase (Aliivibrio fischeri (strain ATCC 700601 / ES114) (Vibrio fischeri)).